A 368-amino-acid polypeptide reads, in one-letter code: uncharacterized protein (368 aa).

This is an uncharacterized protein from Rickettsia prowazekii (strain Madrid E).